Consider the following 271-residue polypeptide: Troponin T, fast skeletal muscle (271 aa).

Acidic residues predominate over residues 1 to 21; sequence MSDEEVEHVEEEYEEEEEAQE. The interval 1–74 is disordered; sequence MSDEEVEHVE…EKVDFDDIQK (74 aa). Ser-2 is subject to N-acetylserine. Position 2 is a phosphoserine (Ser-2). 2 stretches are compositionally biased toward basic and acidic residues: residues 31-53 and 62-74; these read PEVH…EKPR and PEGE…DIQK. Ser-90 is subject to Phosphoserine. The span at 113–155 shows a compositional bias: basic and acidic residues; the sequence is RAERAEQQRIRAEKERERQNRLAEEKARREEEDAKRRAEDDLK. Positions 113-194 are disordered; that stretch reads RAERAEQQRI…REMKKKVLAE (82 aa). A phosphoserine mark is found at Ser-161, Ser-168, and Ser-169. Residues 183–194 show a composition bias toward basic and acidic residues; the sequence is TAREMKKKVLAE. Ser-205 is subject to Phosphoserine. The residue at position 221 (Tyr-221) is a Phosphotyrosine. The segment at 248 to 271 is disordered; that stretch reads IDQAQKHSKKAGTAPKGKVGGRWK.

This sequence belongs to the troponin T family.

Troponin T is the tropomyosin-binding subunit of troponin, the thin filament regulatory complex which confers calcium-sensitivity to striated muscle actomyosin ATPase activity. This Bos taurus (Bovine) protein is Troponin T, fast skeletal muscle (Tnnt3).